The chain runs to 276 residues: Rhomboid protease GlpG (276 aa).

The next 6 helical transmembrane spans lie at 94 to 114 (GPVT…MQIL), 142 to 162 (ALMH…WYLG), 169 to 189 (LGSG…GYVQ), 192 to 212 (FSGP…GYVW), 229 to 249 (LIIF…GMSM), and 250 to 270 (ANGA…VDSL). Residue S201 is the Nucleophile of the active site. H254 is an active-site residue.

It belongs to the peptidase S54 family.

The protein resides in the cell inner membrane. It carries out the reaction Cleaves type-1 transmembrane domains using a catalytic dyad composed of serine and histidine that are contributed by different transmembrane domains.. Functionally, rhomboid-type serine protease that catalyzes intramembrane proteolysis. This Escherichia fergusonii (strain ATCC 35469 / DSM 13698 / CCUG 18766 / IAM 14443 / JCM 21226 / LMG 7866 / NBRC 102419 / NCTC 12128 / CDC 0568-73) protein is Rhomboid protease GlpG.